Here is a 121-residue protein sequence, read N- to C-terminus: Ribosome-binding factor A (121 aa).

This sequence belongs to the RbfA family. Monomer. Binds 30S ribosomal subunits, but not 50S ribosomal subunits or 70S ribosomes.

It localises to the cytoplasm. In terms of biological role, one of several proteins that assist in the late maturation steps of the functional core of the 30S ribosomal subunit. Associates with free 30S ribosomal subunits (but not with 30S subunits that are part of 70S ribosomes or polysomes). Required for efficient processing of 16S rRNA. May interact with the 5'-terminal helix region of 16S rRNA. This chain is Ribosome-binding factor A, found in Heliobacterium modesticaldum (strain ATCC 51547 / Ice1).